Here is a 289-residue protein sequence, read N- to C-terminus: MGFADFFKTFTRERAKEGESPSHWIKCPSCSALMYYKEVIAQHHVCPKCNFHMRIALEDRIEMLCDEGTLIEHDASLEPTDPLTFVDKKSYKKRIEEGKQKTGRASSVLSGECRINGVSTQIVLFNFAFMGGSLGSVEGEKIVRAVNRALEKHQGLVILSTSGGARMQESTYSLMQMAKTSAALARLSQAKLPFISLLTDPTMGGVSASFAFLGDIIIAEPGAMVGFAGARVIKQTIGADLPEGFQTAEFLLEHGLIDMITPRKEMKKTLGDLLRFFNPYDENPCLLHL.

The region spanning His-23–Leu-289 is the CoA carboxyltransferase N-terminal domain. The Zn(2+) site is built by Cys-27, Cys-30, Cys-46, and Cys-49. The C4-type zinc finger occupies Cys-27–Cys-49.

It belongs to the AccD/PCCB family. As to quaternary structure, acetyl-CoA carboxylase is a heterohexamer composed of biotin carboxyl carrier protein (AccB), biotin carboxylase (AccC) and two subunits each of ACCase subunit alpha (AccA) and ACCase subunit beta (AccD). Zn(2+) serves as cofactor.

It localises to the cytoplasm. The enzyme catalyses N(6)-carboxybiotinyl-L-lysyl-[protein] + acetyl-CoA = N(6)-biotinyl-L-lysyl-[protein] + malonyl-CoA. It functions in the pathway lipid metabolism; malonyl-CoA biosynthesis; malonyl-CoA from acetyl-CoA: step 1/1. Component of the acetyl coenzyme A carboxylase (ACC) complex. Biotin carboxylase (BC) catalyzes the carboxylation of biotin on its carrier protein (BCCP) and then the CO(2) group is transferred by the transcarboxylase to acetyl-CoA to form malonyl-CoA. This is Acetyl-coenzyme A carboxylase carboxyl transferase subunit beta from Wolinella succinogenes (strain ATCC 29543 / DSM 1740 / CCUG 13145 / JCM 31913 / LMG 7466 / NCTC 11488 / FDC 602W) (Vibrio succinogenes).